Here is a 262-residue protein sequence, read N- to C-terminus: Acyl-[acyl-carrier-protein]--UDP-N-acetylglucosamine O-acyltransferase (262 aa).

It belongs to the transferase hexapeptide repeat family. LpxA subfamily. Homotrimer.

Its subcellular location is the cytoplasm. It catalyses the reaction a (3R)-hydroxyacyl-[ACP] + UDP-N-acetyl-alpha-D-glucosamine = a UDP-3-O-[(3R)-3-hydroxyacyl]-N-acetyl-alpha-D-glucosamine + holo-[ACP]. It participates in glycolipid biosynthesis; lipid IV(A) biosynthesis; lipid IV(A) from (3R)-3-hydroxytetradecanoyl-[acyl-carrier-protein] and UDP-N-acetyl-alpha-D-glucosamine: step 1/6. Functionally, involved in the biosynthesis of lipid A, a phosphorylated glycolipid that anchors the lipopolysaccharide to the outer membrane of the cell. The protein is Acyl-[acyl-carrier-protein]--UDP-N-acetylglucosamine O-acyltransferase of Janthinobacterium sp. (strain Marseille) (Minibacterium massiliensis).